The sequence spans 291 residues: uncharacterized protein (291 aa).

The next 10 helical transmembrane spans lie at 1–21 (MHNL…LKIA), 26–46 (IIIE…SYFL), 67–87 (PIFL…SKAV), 95–115 (SDAA…LIFH), 117–137 (TLSQ…FCLL), 149–169 (FKGV…DILF), 179–199 (FPAT…IYLF), 208–228 (SSVI…LFYI), 241–261 (VFAG…ALVF), and 270–290 (WLGI…DKII). In terms of domain architecture, EamA spans 107-138 (ILAAFLIFHETLSQSKIIGVVLAFIGLFCLLT).

It localises to the cell membrane. This is an uncharacterized protein from Haemophilus influenzae (strain ATCC 51907 / DSM 11121 / KW20 / Rd).